The following is a 150-amino-acid chain: Large ribosomal subunit protein bL9 (150 aa).

This sequence belongs to the bacterial ribosomal protein bL9 family.

Binds to the 23S rRNA. This chain is Large ribosomal subunit protein bL9, found in Lactiplantibacillus plantarum (strain ATCC BAA-793 / NCIMB 8826 / WCFS1) (Lactobacillus plantarum).